The chain runs to 500 residues: uncharacterized protein (500 aa).

Positions 1 to 13 (MEPSQRSGSFSSI) are enriched in low complexity. The tract at residues 1-23 (MEPSQRSGSFSSISRRRSRVDSR) is disordered. Ser9 carries the post-translational modification Phosphoserine. 12 helical membrane-spanning segments follow: residues 87–107 (VSIAFILINSLMSDMSLAVAL), 126–146 (LVIGIPTLISLIFLYPMLCFA), 156–176 (LYFRPMVVSSFAHIFGHLLYC), 183–203 (WIYLILIGRMLNGIGFTTFLY), 225–245 (MNILAQTLGFMAGPFLGGILA), 261–281 (VASWVMLFMWFFYMLTIIFFF), 312–332 (FLLFFLAEVAFIAYFTVNGYQ), 351–371 (GNFIALSALIVAPFILASSFL), 380–400 (IMLGGLFLGILAVAIHLVLDA), 408–428 (VYFFLYSLMIYGYSIGSAPLI), 445–465 (IVVQVGVSLSNTFGSICGGAI), and 471–491 (VGFISLCLGLAAVVYMQLIFM).

This sequence belongs to the major facilitator superfamily.

It is found in the golgi apparatus. The protein resides in the membrane. This is an uncharacterized protein from Schizosaccharomyces pombe (strain 972 / ATCC 24843) (Fission yeast).